A 273-amino-acid chain; its full sequence is NAD(P)H-hydrate epimerase (273 aa).

Residues 18-257 (ALKLDEDLIN…LLAMEYDVQE (240 aa)) enclose the YjeF N-terminal domain. Residue 71 to 75 (NNGGD) participates in (6S)-NADPHX binding. K(+) is bound by residues Asn-72 and Asp-146. (6S)-NADPHX contacts are provided by residues 150–157 (GFSFHGGP), Tyr-162, and Asp-188. K(+) is bound at residue Ser-191.

It belongs to the NnrE/AIBP family. The cofactor is K(+).

It carries out the reaction (6R)-NADHX = (6S)-NADHX. The catalysed reaction is (6R)-NADPHX = (6S)-NADPHX. Catalyzes the epimerization of the S- and R-forms of NAD(P)HX, a damaged form of NAD(P)H that is a result of enzymatic or heat-dependent hydration. This is a prerequisite for the S-specific NAD(P)H-hydrate dehydratase to allow the repair of both epimers of NAD(P)HX. The chain is NAD(P)H-hydrate epimerase from Giardia intestinalis (strain ATCC 50803 / WB clone C6) (Giardia lamblia).